We begin with the raw amino-acid sequence, 448 residues long: MGKYFGTDGVRGVANTQLTPELAFKIGRVGGYVLTRHKQEGKPKVVIGRDTRISGQMLENALLAGLLSVGAEVVRLGVISTSGVAYLTRALGADAGVMISASHNPFPDNGIKFFGSNGFKLSDEVEAEVEQYLDAAEDTMPRPTGEQIGTVLEFLEGGQKYLSHLKSTVSERFDGLKVVLDCANGAVSSLAARLFADVDAEVITIGANPNGININDQCGSTHPERLVEEVLKHKADLGLSFDGDADRCIAVDNNGEIIDGDYIMAICARALKAKGKLNNNTVVTTVMANMGFFKGMEECSINTTKTAVGDRYVVEEMLRGGYNLGGEQSGHIVFLDYNTTGDGLLTGLQLLNIIKESGKPLSELKQVMVKYPQLLINVRVEDKSKLNGNEAIAQAIREVEEDLAGNGRVLVRPSGTEPIVRVMAEGPDAAQLEGLVNRIVDVVKQQLV.

Ser-102 acts as the Phosphoserine intermediate in catalysis. Ser-102, Asp-242, Asp-244, and Asp-246 together coordinate Mg(2+). A Phosphoserine modification is found at Ser-102.

It belongs to the phosphohexose mutase family. Requires Mg(2+) as cofactor. Post-translationally, activated by phosphorylation.

The catalysed reaction is alpha-D-glucosamine 1-phosphate = D-glucosamine 6-phosphate. In terms of biological role, catalyzes the conversion of glucosamine-6-phosphate to glucosamine-1-phosphate. This chain is Phosphoglucosamine mutase, found in Brevibacillus brevis (strain 47 / JCM 6285 / NBRC 100599).